A 342-amino-acid polypeptide reads, in one-letter code: Aromatic amino acid aminotransferase (342 aa).

Residue lysine 214 is modified to N6-(pyridoxal phosphate)lysine.

This sequence belongs to the class-II pyridoxal-phosphate-dependent aminotransferase family. Homodimer. Pyridoxal 5'-phosphate serves as cofactor.

The catalysed reaction is an aromatic L-alpha-amino acid + 2-oxoglutarate = an aromatic oxo-acid + L-glutamate. Aminotransferase that catalyzes the conversion of aromatic amino acids and 2-oxoglutarate into corresponding aromatic oxo acids and L-glutamate. The sequence is that of Aromatic amino acid aminotransferase from Corynebacterium efficiens (strain DSM 44549 / YS-314 / AJ 12310 / JCM 11189 / NBRC 100395).